An 855-amino-acid chain; its full sequence is Homeobox-leucine zipper protein HOX33 (855 aa).

Residues 1–21 (MAAAAVGGRGERLSSSSPTAA) are disordered. Residues 26–89 (DAGKYVRYTP…NRRCREKQRK (64 aa)) constitute a DNA-binding region (homeobox). The stretch at 84–126 (REKQRKEASRLQTVNRKLNAMNKLLMEENDRLQKQVSRLVYEN) forms a coiled coil. The region spanning 168–390 (DANNPAGLLA…LRHIRQIAHE (223 aa)) is the START domain.

It belongs to the HD-ZIP homeobox family. Class III subfamily. In terms of tissue distribution, expressed in seedlings, roots, stems, leaf sheaths and blades and panicles.

The protein resides in the nucleus. Functionally, probable transcription factor. This chain is Homeobox-leucine zipper protein HOX33 (HOX33), found in Oryza sativa subsp. indica (Rice).